The following is a 21-amino-acid chain: Snake venom serine protease jerdonase (21 aa).

A Peptidase S1 domain is found at 1–21 (IIGGDECNINEHPFLVALYDA).

Belongs to the peptidase S1 family. Snake venom subfamily. As to quaternary structure, monomer. Glycosylated; contains 35.8% neutral carbohydrate. As to expression, expressed by the venom gland.

It is found in the secreted. With respect to regulation, inhibited by PMSF and soybean trypsin inhibitor. Partially inhibited by L-cysteine and DTT. Not affected by EDTA. Multifunctional venom serine protease that has fibrino(geno)lytic activity towards the A alpha-chain of human fibrinogen (FGA) and a slow activity towards the B beta-chain (FGB). Also hydrolyzes bovine low-molecular-mass kininogen and releases bradykinin. Catalyzes the hydrolysis of BAEE, S-2238 and S-2302. This is Snake venom serine protease jerdonase from Protobothrops jerdonii (Jerdon's pitviper).